Here is a 201-residue protein sequence, read N- to C-terminus: Cell division protein SepF (201 aa).

Over residues Val-27–Arg-38 the composition is skewed to basic and acidic residues. Residues Val-27 to Arg-99 form a disordered region. Polar residues predominate over residues Gln-43 to Ser-54. Residues Asn-72–Arg-81 show a composition bias toward basic and acidic residues. The segment covering Asn-83–Val-92 has biased composition (polar residues).

This sequence belongs to the SepF family. As to quaternary structure, homodimer. Interacts with FtsZ.

Its subcellular location is the cytoplasm. Cell division protein that is part of the divisome complex and is recruited early to the Z-ring. Probably stimulates Z-ring formation, perhaps through the cross-linking of FtsZ protofilaments. Its function overlaps with FtsA. The sequence is that of Cell division protein SepF from Streptococcus agalactiae serotype Ia (strain ATCC 27591 / A909 / CDC SS700).